We begin with the raw amino-acid sequence, 45 residues long: NLR family pyrin domain-containing protein 2B (45 aa).

As to expression, expressed in all tissues tested, including spleen, lymph node, thymus, tonsil, peripheral blood leukocyte, bone marrow, liver, heart, brain, placenta, lung, skeletal muscle, kidney and pancreas.

It is found in the cytoplasm. It localises to the nucleus. Its function is as follows. May function as a negative regulator of NF-kappa-B by preventing RELA/p65 phosphorylation at 'Ser-536', thereby inhibiting its transcriptional activity. Through NF-kappa-B regulation may control cytokine release upon Toll-like receptors activation and therefore play a role in modulation of innate immunity. May also play a role in cell cycle progression and apoptotic process. The protein is NLR family pyrin domain-containing protein 2B of Homo sapiens (Human).